Consider the following 116-residue polypeptide: Small ribosomal subunit protein uS13 (116 aa).

Positions 92–116 are disordered; that stretch reads RRGLPVRGQNTKNNARTRKGTKRNR. Over residues 106–116 the composition is skewed to basic residues; that stretch reads ARTRKGTKRNR.

This sequence belongs to the universal ribosomal protein uS13 family. Part of the 30S ribosomal subunit. Forms a loose heterodimer with protein S19. Forms two bridges to the 50S subunit in the 70S ribosome.

Its function is as follows. Located at the top of the head of the 30S subunit, it contacts several helices of the 16S rRNA. In the 70S ribosome it contacts the 23S rRNA (bridge B1a) and protein L5 of the 50S subunit (bridge B1b), connecting the 2 subunits; these bridges are implicated in subunit movement. Contacts the tRNAs in the A and P-sites. The chain is Small ribosomal subunit protein uS13 from Lactobacillus acidophilus (strain ATCC 700396 / NCK56 / N2 / NCFM).